We begin with the raw amino-acid sequence, 159 residues long: Aspartate carbamoyltransferase regulatory chain (159 aa).

Zn(2+) is bound by residues C111, C116, C141, and C144.

This sequence belongs to the PyrI family. In terms of assembly, contains catalytic and regulatory chains. Requires Zn(2+) as cofactor.

Its function is as follows. Involved in allosteric regulation of aspartate carbamoyltransferase. The polypeptide is Aspartate carbamoyltransferase regulatory chain (Aeropyrum pernix (strain ATCC 700893 / DSM 11879 / JCM 9820 / NBRC 100138 / K1)).